The sequence spans 81 residues: Large ribosomal subunit protein bL31B (81 aa).

It belongs to the bacterial ribosomal protein bL31 family. Type B subfamily. As to quaternary structure, part of the 50S ribosomal subunit.

This chain is Large ribosomal subunit protein bL31B (rpmE2), found in Lactiplantibacillus plantarum (strain ATCC BAA-793 / NCIMB 8826 / WCFS1) (Lactobacillus plantarum).